A 145-amino-acid polypeptide reads, in one-letter code: Peptide methionine sulfoxide reductase MsrB (145 aa).

In terms of domain architecture, MsrB spans 6–129 (KNERLQQLTD…NSAALRFIPV (124 aa)). The active-site Nucleophile is the Cys-118.

Belongs to the MsrB Met sulfoxide reductase family.

The catalysed reaction is L-methionyl-[protein] + [thioredoxin]-disulfide + H2O = L-methionyl-(R)-S-oxide-[protein] + [thioredoxin]-dithiol. This Listeria monocytogenes serotype 4a (strain HCC23) protein is Peptide methionine sulfoxide reductase MsrB.